The primary structure comprises 121 residues: Small ribosomal subunit protein uS13 (121 aa).

The interval 93–121 (RHLPVRGQNTKNNARTRKGPAVSIAGKKK) is disordered.

The protein belongs to the universal ribosomal protein uS13 family. As to quaternary structure, part of the 30S ribosomal subunit. Forms a loose heterodimer with protein S19. Forms two bridges to the 50S subunit in the 70S ribosome.

In terms of biological role, located at the top of the head of the 30S subunit, it contacts several helices of the 16S rRNA. In the 70S ribosome it contacts the 23S rRNA (bridge B1a) and protein L5 of the 50S subunit (bridge B1b), connecting the 2 subunits; these bridges are implicated in subunit movement. Contacts the tRNAs in the A and P-sites. This Ligilactobacillus salivarius (strain UCC118) (Lactobacillus salivarius) protein is Small ribosomal subunit protein uS13.